The chain runs to 171 residues: Ribosome maturation factor RimM (171 aa).

Residues 97 to 170 (EGEYYYHEII…LVTIHVMEGL (74 aa)) enclose the PRC barrel domain.

The protein belongs to the RimM family. In terms of assembly, binds ribosomal protein uS19.

Its subcellular location is the cytoplasm. In terms of biological role, an accessory protein needed during the final step in the assembly of 30S ribosomal subunit, possibly for assembly of the head region. Essential for efficient processing of 16S rRNA. May be needed both before and after RbfA during the maturation of 16S rRNA. It has affinity for free ribosomal 30S subunits but not for 70S ribosomes. This is Ribosome maturation factor RimM from Bacillus cereus (strain ATCC 14579 / DSM 31 / CCUG 7414 / JCM 2152 / NBRC 15305 / NCIMB 9373 / NCTC 2599 / NRRL B-3711).